The chain runs to 118 residues: UPF0251 protein Teth39_0655 (118 aa).

Belongs to the UPF0251 family.

The sequence is that of UPF0251 protein Teth39_0655 from Thermoanaerobacter pseudethanolicus (strain ATCC 33223 / 39E) (Clostridium thermohydrosulfuricum).